The primary structure comprises 283 residues: Protoheme IX farnesyltransferase (283 aa).

Transmembrane regions (helical) follow at residues 6–26 (LLLT…AGFL), 35–55 (FGLF…GCVF), 85–105 (AIVF…FYTN), 106–126 (LLTL…YSIW), 131–151 (VYGT…GYCA), 160–180 (AFIL…SIAI), 207–227 (ILLY…FHFT), 230–250 (LYLI…LRGL), and 262–282 (MFRF…FDLV).

It belongs to the UbiA prenyltransferase family. Protoheme IX farnesyltransferase subfamily.

The protein localises to the cell inner membrane. The catalysed reaction is heme b + (2E,6E)-farnesyl diphosphate + H2O = Fe(II)-heme o + diphosphate. Its pathway is porphyrin-containing compound metabolism; heme O biosynthesis; heme O from protoheme: step 1/1. Functionally, converts heme B (protoheme IX) to heme O by substitution of the vinyl group on carbon 2 of heme B porphyrin ring with a hydroxyethyl farnesyl side group. This chain is Protoheme IX farnesyltransferase, found in Protochlamydia amoebophila (strain UWE25).